A 277-amino-acid chain; its full sequence is Pristinamycin IIA synthase subunit B (277 aa).

In terms of assembly, heterodimer of two subunits, SnaA and SnaB. It depends on FMN as a cofactor.

Its function is as follows. Catalyzes the oxidation of the proline residue of pristinamycin IIB (PIIB) to pristinamycin IIA (PIIA). This chain is Pristinamycin IIA synthase subunit B (snaB), found in Streptomyces pristinaespiralis.